The following is a 997-amino-acid chain: LPS-assembly protein LptD (997 aa).

Positions 1-27 (MLYSPLYQSIRLILFGALGLSSLTVSA) are cleaved as a signal peptide.

The protein belongs to the LptD family. In terms of assembly, component of the lipopolysaccharide transport and assembly complex. Interacts with LptE and LptA.

Its subcellular location is the cell outer membrane. In terms of biological role, together with LptE, is involved in the assembly of lipopolysaccharide (LPS) at the surface of the outer membrane. The polypeptide is LPS-assembly protein LptD (Psychrobacter cryohalolentis (strain ATCC BAA-1226 / DSM 17306 / VKM B-2378 / K5)).